A 66-amino-acid chain; its full sequence is Large ribosomal subunit protein uL29 (66 aa).

Belongs to the universal ribosomal protein uL29 family.

The polypeptide is Large ribosomal subunit protein uL29 (Rhizobium johnstonii (strain DSM 114642 / LMG 32736 / 3841) (Rhizobium leguminosarum bv. viciae)).